The sequence spans 344 residues: MMMFKSGDMDYTQKMKRCHEYVEALEEEQKKIQVFQRELPLCLELVTQAIESCRKELSESSEHVGGQSECSERTTSECGGAVFEEFMPIKWSSASSDETDKDEEAEKTEMMTNENNDGDKKKSDWLRSVQLWNQSPDPQPNNKKPMVIEVKRSAGAFQPFQKEKPKAADSQPLIKAITPTSTTTTSSTAETVGGGKEFEEQKQSHSNRKQRRCWSPELHRRFLHALQQLGGSHVATPKQIRDLMKVDGLTNDEVKSHLQKYRLHTRRPATPVVRTGGENPQQRQFMVMEGIWVPSHDTTNNRVYAPVATQPPQSSTSGERSNRGCKSPATSSTTTHTPHLLPLS.

Disordered regions lie at residues K90–K122 and A156–R212. Positions D97–E106 are enriched in acidic residues. Over residues T178–T188 the composition is skewed to low complexity. One can recognise an HTH myb-type domain in the interval S206–R266. The segment at residues P237–R262 is a DNA-binding region (H-T-H motif). Residues P306–S344 are disordered. The span at Q310–E319 shows a compositional bias: polar residues. Positions T330–S344 are enriched in low complexity.

The protein localises to the nucleus. Functionally, probable transcription factor involved in phosphate signaling in roots. This chain is Transcription factor HHO3, found in Arabidopsis thaliana (Mouse-ear cress).